Consider the following 198-residue polypeptide: Putative coiled-coil domain-containing protein 196 (198 aa).

Residues 24-117 (NYLKELNEDL…RKEMEMLWNK (94 aa)) are a coiled coil. 2 stretches are compositionally biased toward basic and acidic residues: residues 135 to 144 (NKTDLQDGKA) and 154 to 167 (TKNE…EKGK). Residues 135 to 198 (NKTDLQDGKA…VSGTSQHHSE (64 aa)) form a disordered region. The span at 187–198 (GQVSGTSQHHSE) shows a compositional bias: polar residues.

The protein is Putative coiled-coil domain-containing protein 196 of Bos taurus (Bovine).